The chain runs to 590 residues: MGFHLITQLKGMSVVLVLLPTLLLVMLTGAQRACPKNCRCDGKIVYCESHAFADIPENISGGSQGLSLRFNSIQKLKSNQFAGLNQLIWLYLDHNYISSVDEDAFQGIRRLKELILSSNKITYLHNKTFHPVPNLRNLDLSYNKLQTLQSEQFKGLRKLIILHLRSNSLKTVPIRVFQDCRNLDFLDLGYNRLRSLSRNAFAGLLKLKELHLEHNQFSKINFAHFPRLFNLRSIYLQWNRIRSISQGLTWTWSSLHNLDLSGNDIQGIEPGTFKCLPNLQKLNLDSNKLTNISQETVNAWISLISITLSGNMWECSRSICPLFYWLKNFKGNKESTMICAGPKHIQGEKVSDAVETYNICSEVQVVNTERSHLVPQTPQKPLIIPRPTIFKPDVTQSTFETPSPSPGFQIPGAEQEYEHVSFHKIIAGSVALFLSVAMILLVIYVSWKRYPASMKQLQQHSLMKRRRKKARESERQMNSPLQEYYVDYKPTNSETMDISVNGSGPCTYTISGSRECEMPHHMKPLPYYSYDQPVIGYCQAHQPLHVTKGYETVSPEQDESPGLELGRDHSFIATIARSAAPAIYLERIAN.

The first 30 residues, 1–30, serve as a signal peptide directing secretion; the sequence is MGFHLITQLKGMSVVLVLLPTLLLVMLTGA. The LRRNT domain maps to 31-61; that stretch reads QRACPKNCRCDGKIVYCESHAFADIPENISG. At 31-424 the chain is on the extracellular side; that stretch reads QRACPKNCRC…QEYEHVSFHK (394 aa). Asn58 carries N-linked (GlcNAc...) asparagine glycosylation. LRR repeat units lie at residues 62 to 83, 86 to 107, 110 to 131, 134 to 155, 158 to 179, 182 to 203, 206 to 226, 230 to 251, 254 to 275, and 278 to 299; these read GSQG…QFAG, QLIW…AFQG, RLKE…TFHP, NLRN…QFKG, KLII…VFQD, NLDF…AFAG, KLKE…AHFP, NLRS…LTWT, SLHN…TFKC, and NLQK…TVNA. Asn126 carries an N-linked (GlcNAc...) asparagine glycan. The N-linked (GlcNAc...) asparagine glycan is linked to Asn291. Residues 311–362 enclose the LRRCT domain; sequence NMWECSRSICPLFYWLKNFKGNKESTMICAGPKHIQGEKVSDAVETYNICSE. Residues 425–445 traverse the membrane as a helical segment; it reads IIAGSVALFLSVAMILLVIYV. At 446 to 590 the chain is on the cytoplasmic side; it reads SWKRYPASMK…PAIYLERIAN (145 aa).

The protein belongs to the LRRTM family. Peripherally associated with AMPAR complex. AMPAR complex consists of an inner core made of 4 pore-forming GluA/GRIA proteins (GRIA1, GRIA2, GRIA3 and GRIA4) and 4 major auxiliary subunits arranged in a twofold symmetry. One of the two pairs of distinct binding sites is occupied either by CNIH2, CNIH3 or CACNG2, CACNG3. The other harbors CACNG2, CACNG3, CACNG4, CACNG8 or GSG1L. This inner core of AMPAR complex is complemented by outer core constituents binding directly to the GluA/GRIA proteins at sites distinct from the interaction sites of the inner core constituents. Outer core constituents include at least PRRT1, PRRT2, CKAMP44/SHISA9, FRRS1L and NRN1. The proteins of the inner and outer core serve as a platform for other, more peripherally associated AMPAR constituents, including LRRTM4. Alone or in combination, these auxiliary subunits control the gating and pharmacology of the AMPAR complex and profoundly impact their biogenesis and protein processing. In terms of tissue distribution, expressed in neuronal tissues.

The protein resides in the cell membrane. It localises to the postsynaptic cell membrane. Functionally, may play a role in the development and maintenance of the vertebrate nervous system. Exhibits strong synaptogenic activity, restricted to excitatory presynaptic differentiation. The polypeptide is Leucine-rich repeat transmembrane neuronal protein 4 (LRRTM4) (Homo sapiens (Human)).